The following is a 1073-amino-acid chain: Carbamoyl phosphate synthase large chain (1073 aa).

The segment at 2-403 is carboxyphosphate synthetic domain; that stretch reads PKRTDIKSIL…SVQKALRGLE (402 aa). ATP contacts are provided by Arg-129, Arg-169, Gly-175, Gly-176, Glu-208, Leu-210, Glu-215, Gly-241, Val-242, His-243, Gln-285, and Glu-299. Residues 133-328 form the ATP-grasp 1 domain; the sequence is DKAMKDIGLA…IAKIAAKLAV (196 aa). 3 residues coordinate Mg(2+): Gln-285, Glu-299, and Asn-301. Gln-285, Glu-299, and Asn-301 together coordinate Mn(2+). Positions 404–553 are oligomerization domain; that stretch reads VGATGFDPKL…YSTYEEECEA (150 aa). The carbamoyl phosphate synthetic domain stretch occupies residues 554-935; the sequence is NPSSREKIMI…AFAKAQLGAS (382 aa). The 192-residue stretch at 678-869 folds into the ATP-grasp 2 domain; sequence QQMVQRLNLR…LAKVAARVMA (192 aa). ATP is bound by residues Arg-714, His-753, Leu-755, Glu-760, Gly-785, Val-786, His-787, Ser-788, Gln-828, and Glu-840. Residues Gln-828, Glu-840, and Asn-842 each coordinate Mg(2+). Mn(2+) is bound by residues Gln-828, Glu-840, and Asn-842. The region spanning 936–1073 is the MGS-like domain; sequence EILPTAGCAF…LQDLHAGIKA (138 aa). Residues 936-1073 form an allosteric domain region; sequence EILPTAGCAF…LQDLHAGIKA (138 aa).

The protein belongs to the CarB family. As to quaternary structure, composed of two chains; the small (or glutamine) chain promotes the hydrolysis of glutamine to ammonia, which is used by the large (or ammonia) chain to synthesize carbamoyl phosphate. Tetramer of heterodimers (alpha,beta)4. Mg(2+) is required as a cofactor. It depends on Mn(2+) as a cofactor.

It carries out the reaction hydrogencarbonate + L-glutamine + 2 ATP + H2O = carbamoyl phosphate + L-glutamate + 2 ADP + phosphate + 2 H(+). It catalyses the reaction hydrogencarbonate + NH4(+) + 2 ATP = carbamoyl phosphate + 2 ADP + phosphate + 2 H(+). It participates in amino-acid biosynthesis; L-arginine biosynthesis; carbamoyl phosphate from bicarbonate: step 1/1. The protein operates within pyrimidine metabolism; UMP biosynthesis via de novo pathway; (S)-dihydroorotate from bicarbonate: step 1/3. In terms of biological role, large subunit of the glutamine-dependent carbamoyl phosphate synthetase (CPSase). CPSase catalyzes the formation of carbamoyl phosphate from the ammonia moiety of glutamine, carbonate, and phosphate donated by ATP, constituting the first step of 2 biosynthetic pathways, one leading to arginine and/or urea and the other to pyrimidine nucleotides. The large subunit (synthetase) binds the substrates ammonia (free or transferred from glutamine from the small subunit), hydrogencarbonate and ATP and carries out an ATP-coupled ligase reaction, activating hydrogencarbonate by forming carboxy phosphate which reacts with ammonia to form carbamoyl phosphate. This is Carbamoyl phosphate synthase large chain from Pseudomonas aeruginosa (strain ATCC 15692 / DSM 22644 / CIP 104116 / JCM 14847 / LMG 12228 / 1C / PRS 101 / PAO1).